A 146-amino-acid chain; its full sequence is Hemoglobin subunit beta (146 aa).

V1 carries the post-translational modification N-acetylvaline. A Globin domain is found at 2 to 146 (HLTPEEKVAV…VANALAHKYH (145 aa)). T12 is modified (phosphothreonine). S44 is modified (phosphoserine). Residue K59 is modified to N6-acetyllysine. Residue H63 participates in heme b binding. K82 bears the N6-acetyllysine mark. H92 serves as a coordination point for heme b. An S-nitrosocysteine modification is found at C93. K144 carries the post-translational modification N6-acetyllysine.

It belongs to the globin family. Heterotetramer of two alpha chains and two beta chains. As to expression, red blood cells.

Involved in oxygen transport from the lung to the various peripheral tissues. The sequence is that of Hemoglobin subunit beta (HBB) from Cercocebus atys (Sooty mangabey).